A 547-amino-acid polypeptide reads, in one-letter code: Trigger factor-like protein TIG, Chloroplastic (547 aa).

The N-terminal 77 residues, 1–77, are a transit peptide targeting the chloroplast; the sequence is MELCVISTTT…SHGGNFRLFA (77 aa). At alanine 78 the chain carries N-acetylalanine. The 96-residue stretch at 271–366 folds into the PPIase FKBP-type domain; sequence GDLAVVDISA…LFYRDLPTLD (96 aa).

Belongs to the FKBP-type PPIase family. Tig subfamily.

It localises to the plastid. Its subcellular location is the chloroplast. It catalyses the reaction [protein]-peptidylproline (omega=180) = [protein]-peptidylproline (omega=0). In terms of biological role, involved in protein export. Acts as a chaperone by maintaining the newly synthesized protein in an open conformation. Functions as a peptidyl-prolyl cis-trans isomerase. This Arabidopsis thaliana (Mouse-ear cress) protein is Trigger factor-like protein TIG, Chloroplastic (TIG).